We begin with the raw amino-acid sequence, 463 residues long: Protein MRG3-like (463 aa).

A helical membrane pass occupies residues 54–74; the sequence is WVLSTGIVSFIAFNIWWVYWP. TPR repeat units follow at residues 84 to 118, 128 to 161, 358 to 389, and 409 to 442; these read KILRKGLHSEIKKEGANYQKSLEYYLEALEECKAE, TGIEIKIGEMYEKLHMYNDATALYGDMLKKFYNE, ELIRSRLQENQNSCLQYSADCYKSIISFANEN, and SLAHYGIGVINLHKGRLRASKKELKKAIRISEMI.

Belongs to the MGR3 family.

The protein localises to the membrane. In Saccharomyces cerevisiae (strain ATCC 204508 / S288c) (Baker's yeast), this protein is Protein MRG3-like.